Consider the following 90-residue polypeptide: DNA-binding protein HU-beta (90 aa).

This sequence belongs to the bacterial histone-like protein family. In terms of assembly, heterodimer of an alpha and a beta chain.

Histone-like DNA-binding protein which is capable of wrapping DNA to stabilize it, and thus to prevent its denaturation under extreme environmental conditions. The protein is DNA-binding protein HU-beta (hupB) of Serratia marcescens.